The following is a 199-amino-acid chain: N-(5'-phosphoribosyl)anthranilate isomerase (199 aa).

It belongs to the TrpF family.

It catalyses the reaction N-(5-phospho-beta-D-ribosyl)anthranilate = 1-(2-carboxyphenylamino)-1-deoxy-D-ribulose 5-phosphate. It participates in amino-acid biosynthesis; L-tryptophan biosynthesis; L-tryptophan from chorismate: step 3/5. This chain is N-(5'-phosphoribosyl)anthranilate isomerase, found in Streptococcus pneumoniae (strain ATCC BAA-255 / R6).